A 223-amino-acid polypeptide reads, in one-letter code: Acetate CoA-transferase subunit beta (223 aa).

Glu46 is a catalytic residue.

It belongs to the 3-oxoacid CoA-transferase subunit B family. In terms of assembly, heterotetramer composed of two alpha subunits (AtoD) and two beta subunits (AtoA).

It carries out the reaction an acyl-CoA + acetate = a carboxylate + acetyl-CoA. It catalyses the reaction acetoacetate + acetyl-CoA = acetoacetyl-CoA + acetate. It participates in lipid metabolism; short-chain fatty acid metabolism. In terms of biological role, coenzyme A transferase which is involved in short-chain fatty acid degradation and catalyzes the activation of short-chain fatty acids to their respective CoA thiolesters. The protein is Acetate CoA-transferase subunit beta (atoA) of Haemophilus influenzae (strain ATCC 51907 / DSM 11121 / KW20 / Rd).